Reading from the N-terminus, the 2372-residue chain is NBAS subunit of NRZ tethering complex (2372 aa).

WD repeat units follow at residues 119–158 (DPNP…LFII) and 304–343 (GEQD…LRGS). The tract at residues 447–468 (LESSVKGEEDDGDDDSDSDEEA) is disordered. The span at 454–467 (EEDDGDDDSDSDEE) shows a compositional bias: acidic residues. The stretch at 629-668 (YEDFLSMEEELEQRKERESKKRQELLKKVDFSKLTLEQKE) forms a coiled coil.

It localises to the endoplasmic reticulum. Involved in Golgi-to-endoplasmic reticulum (ER) retrograde transport; the function is proposed to depend on its association in the NRZ complex which is believed to play a role in SNARE assembly at the ER. Required for normal embryonic development. May play a role in the nonsense-mediated decay pathway of mRNAs containing premature stop codons. This chain is NBAS subunit of NRZ tethering complex, found in Danio rerio (Zebrafish).